Here is a 218-residue protein sequence, read N- to C-terminus: MSFLDSYRKKTQMPSTDEALPGRAQPIPTSTTHFVNGRPLKGPWPEGYKQVLFGMGCFWGAERLFWQVPGVYVTAVGYAGGVTPNPTYEETCTGLTGHAEVVLVVYDPKVVSLDELLTLFWEEHDPTQGMRQGNDIGTTYRSVIYTFDKTDRDVAEKSREAYSQALAGRGLGPITTEIEDAPELYYAEDYHQQYLAKNPNGYCGLRGTGVSCPIPLAQ.

The disordered stretch occupies residues 1-28 (MSFLDSYRKKTQMPSTDEALPGRAQPIP). C57 is an active-site residue.

This sequence belongs to the MsrA Met sulfoxide reductase family.

It carries out the reaction L-methionyl-[protein] + [thioredoxin]-disulfide + H2O = L-methionyl-(S)-S-oxide-[protein] + [thioredoxin]-dithiol. The catalysed reaction is [thioredoxin]-disulfide + L-methionine + H2O = L-methionine (S)-S-oxide + [thioredoxin]-dithiol. Functionally, has an important function as a repair enzyme for proteins that have been inactivated by oxidation. Catalyzes the reversible oxidation-reduction of methionine sulfoxide in proteins to methionine. The chain is Peptide methionine sulfoxide reductase MsrA from Brucella anthropi (strain ATCC 49188 / DSM 6882 / CCUG 24695 / JCM 21032 / LMG 3331 / NBRC 15819 / NCTC 12168 / Alc 37) (Ochrobactrum anthropi).